We begin with the raw amino-acid sequence, 726 residues long: tRNA endonuclease ANKZF1 (726 aa).

Positions Leu40 to Leu61 are disordered. The span at Gly52 to Leu61 shows a compositional bias: basic and acidic residues. The segment at Leu72–His96 adopts a C2H2-type zinc-finger fold. The span at Ser120 to Ser130 shows a compositional bias: low complexity. Positions Ser120 to Leu141 are disordered. Over residues Glu131–Leu141 the composition is skewed to acidic residues. The VLRF1 domain occupies Gly203–Leu346. The active site involves Gln246. Residues Ser258, Ser361, and Ser398 each carry the phosphoserine modification. Disordered stretches follow at residues Asp387 to Asp409 and Arg436 to Ala474. A compositionally biased stretch (basic residues) spans Arg436 to Glu445. Positions Thr457–Gln473 are enriched in low complexity. The ANK 1 repeat unit spans residues Glu493–Leu526. Ser533 bears the Phosphoserine mark. An ANK 2 repeat occupies Gly534–Val563. Positions Met588 to Glu656 are disordered. Thr607 bears the Phosphothreonine mark. Residues Glu609–Ala659 are a coiled coil. A compositionally biased stretch (basic and acidic residues) spans Met610 to Glu656. The segment at Asp654 to Leu666 is VCP/p97-interacting motif (VIM). A phosphoserine mark is found at Ser675 and Ser680.

This sequence belongs to the ANKZF1/VMS1 family. Interacts (via VIM motif) with VCP.

The protein localises to the cytoplasm. In terms of biological role, endonuclease that cleaves polypeptidyl-tRNAs downstream of the ribosome-associated quality control (RQC) pathway to release incompletely synthesized polypeptides for degradation. The RQC pathway disassembles aberrantly stalled translation complexes to recycle or degrade the constituent parts. ANKZF1 acts downstream disassembly of stalled ribosomes and specifically cleaves off the terminal 3'-CCA nucleotides universal to all tRNAs from polypeptidyl-tRNAs, releasing (1) ubiquitinated polypeptides from 60S ribosomal subunit for degradation and (2) cleaved tRNAs. ANKZF1-cleaved tRNAs are then repaired and recycled by ELAC1 and TRNT1. Also plays a role in the cellular response to hydrogen peroxide and in the maintenance of mitochondrial integrity under conditions of cellular stress. This is tRNA endonuclease ANKZF1 from Homo sapiens (Human).